Consider the following 138-residue polypeptide: Large ribosomal subunit protein uL16 (138 aa).

Residues 1 to 21 (MLIPRKVKHRKQHHPSLRGRA) are compositionally biased toward basic residues. Residues 1 to 22 (MLIPRKVKHRKQHHPSLRGRAK) form a disordered region.

Belongs to the universal ribosomal protein uL16 family. Part of the 50S ribosomal subunit.

Its function is as follows. Binds 23S rRNA and is also seen to make contacts with the A and possibly P site tRNAs. This Thermobifida fusca (strain YX) protein is Large ribosomal subunit protein uL16.